Consider the following 182-residue polypeptide: Ribosome maturation factor RimM (182 aa).

The PRC barrel domain occupies 103-182 (EDEFYWRELF…RIEVDWDPGF (80 aa)).

Belongs to the RimM family. Binds ribosomal protein uS19.

Its subcellular location is the cytoplasm. Functionally, an accessory protein needed during the final step in the assembly of 30S ribosomal subunit, possibly for assembly of the head region. Essential for efficient processing of 16S rRNA. May be needed both before and after RbfA during the maturation of 16S rRNA. It has affinity for free ribosomal 30S subunits but not for 70S ribosomes. The protein is Ribosome maturation factor RimM of Vibrio vulnificus (strain CMCP6).